Here is a 238-residue protein sequence, read N- to C-terminus: Tetraspanin-8 (238 aa).

Residues 1–9 are Cytoplasmic-facing; sequence MAGVNVCIK. A helical membrane pass occupies residues 10 to 33; that stretch reads CSMFIFNFVFWLCGAIILSVAISI. Over 34–57 the chain is Extracellular; that stretch reads RAGKIGQEILAPGDADLNLFIAVN. The chain crosses the membrane as a helical span at residues 58 to 72; sequence ILIFVGAVIMILGFL. The Cytoplasmic portion of the chain corresponds to 73 to 83; sequence GCCGAMKENQF. A helical transmembrane segment spans residues 84-109; that stretch reads MMILFFVGLLMILLLQVAAGIVATTR. Residues 110 to 206 lie on the Extracellular side of the membrane; it reads KSKTEQALNK…ASISQMFSKR (97 aa). The N-linked (GlcNAc...) asparagine glycan is linked to Asn118. The helical transmembrane segment at 207–231 threads the bilayer; the sequence is LFIVLALAFGLAAIEVLGLIFSIVL. Residues 232-238 lie on the Cytoplasmic side of the membrane; sequence YCQMRKK.

It belongs to the tetraspanin (TM4SF) family. In terms of assembly, forms homooligomers. Interacts with MEP1B. Interacts with integrin alpha3/ITGA3. Interacts with RICTOR and MTOR. Interacts with ADAM17. Interacts with ECE1.

It localises to the cell membrane. Structural component of specialized membrane microdomains known as tetraspanin-enriched microdomains (TERMs), which act as platforms for receptor clustering and signaling. Participates thereby in diverse biological functions such as cell signal transduction, migration and protein trafficking. Promotes ADAM17-mediated TNF-alpha processing through recruitment of ADAM17 to tetraspanin-enriched micro-domains (TEMs). Forms a complex with RICTOR and integrin alpha3/ITGA3 to mediate mTORC2 activation and AKT1 phosphorylation leading to cell migration. Reduces apoptosis and autophagy induced by high glucose levels through forming a complex with mTOR and RICTOR. Contributes to the maintenance of intestinal epithelial barrier and plays a role in the regulation of intestine inflammation by switching interferon gamma receptor 1/IFNGR1 from clathrin-dependent to lipid raft-dependent endocytosis route to limit STAT1 activation magnitude and duration. Acts as a modulator of the endothelin axis by associating with endothelin converting enzyme ECE1 and regulating its activity of conversion of the endothelin-1 precursor to endothelin. The polypeptide is Tetraspanin-8 (TSPAN8) (Bos taurus (Bovine)).